A 545-amino-acid chain; its full sequence is CTP synthase (545 aa).

The interval 1 to 266 is amidoligase domain; it reads MKTNYIFVTG…DDYICKRFSL (266 aa). Ser-14 is a binding site for CTP. Residue Ser-14 coordinates UTP. ATP contacts are provided by residues 15 to 20 and Asp-72; that span reads SLGKGI. Mg(2+) is bound by residues Asp-72 and Glu-140. CTP is bound by residues 147–149, 187–192, and Lys-223; these read DIE and KTKPTQ. UTP-binding positions include 187–192 and Lys-223; that span reads KTKPTQ. 239 to 241 contributes to the ATP binding site; the sequence is KDV. The Glutamine amidotransferase type-1 domain occupies 291–542; it reads TIGMVGKYVE…VKAAFDYQKG (252 aa). Residue Gly-352 participates in L-glutamine binding. Cys-379 (nucleophile; for glutamine hydrolysis) is an active-site residue. Residues 380–383, Glu-403, and Arg-470 each bind L-glutamine; that span reads LGMQ. Catalysis depends on residues His-515 and Glu-517.

It belongs to the CTP synthase family. In terms of assembly, homotetramer.

The enzyme catalyses UTP + L-glutamine + ATP + H2O = CTP + L-glutamate + ADP + phosphate + 2 H(+). It catalyses the reaction L-glutamine + H2O = L-glutamate + NH4(+). It carries out the reaction UTP + NH4(+) + ATP = CTP + ADP + phosphate + 2 H(+). It participates in pyrimidine metabolism; CTP biosynthesis via de novo pathway; CTP from UDP: step 2/2. Allosterically activated by GTP, when glutamine is the substrate; GTP has no effect on the reaction when ammonia is the substrate. The allosteric effector GTP functions by stabilizing the protein conformation that binds the tetrahedral intermediate(s) formed during glutamine hydrolysis. Inhibited by the product CTP, via allosteric rather than competitive inhibition. In terms of biological role, catalyzes the ATP-dependent amination of UTP to CTP with either L-glutamine or ammonia as the source of nitrogen. Regulates intracellular CTP levels through interactions with the four ribonucleotide triphosphates. This Proteus mirabilis (strain HI4320) protein is CTP synthase.